A 340-amino-acid polypeptide reads, in one-letter code: Beta-1,3-N-acetylglucosaminyltransferase radical fringe (340 aa).

At 1–4 (MKIT) the chain is on the cytoplasmic side. Residues 5–25 (YVGLIKVCFLVFLLLCATVLL) traverse the membrane as a helical; Signal-anchor for type II membrane protein segment. Residues 26–340 (NISWRQRDSS…AFSLAEDPTR (315 aa)) lie on the Lumenal side of the membrane. N42 carries an N-linked (GlcNAc...) asparagine glycan. R110 is a binding site for substrate. N-linked (GlcNAc...) asparagine glycosylation is present at N149. Intrachain disulfides connect C150/C161 and C179/C242. D183 serves as a coordination point for substrate. D184 is a Mn(2+) binding site. D272 is an active-site residue. H296 provides a ligand contact to Mn(2+).

It belongs to the glycosyltransferase 31 family. The cofactor is Mn(2+).

It is found in the golgi apparatus membrane. The catalysed reaction is 3-O-(alpha-L-fucosyl)-L-threonyl-[EGF-like domain protein] + UDP-N-acetyl-alpha-D-glucosamine = 3-O-(N-acetyl-beta-D-glucosaminyl-(1-&gt;3)-alpha-L-fucosyl)-L-threonyl-[EGF-like domain protein] + UDP + H(+). The enzyme catalyses 3-O-(alpha-L-fucosyl)-L-seryl-[EGF-like domain protein] + UDP-N-acetyl-alpha-D-glucosamine = 3-O-(N-acetyl-beta-D-glucosaminyl-(1-&gt;3)-alpha-L-fucosyl)-L-seryl-[EGF-like domain protein] + UDP + H(+). In terms of biological role, glycosyltransferase that initiates the elongation of O-linked fucose residues attached to EGF-like repeats in the extracellular domain of Notch molecules. This chain is Beta-1,3-N-acetylglucosaminyltransferase radical fringe (rfng), found in Xenopus laevis (African clawed frog).